A 1027-amino-acid polypeptide reads, in one-letter code: C2 and GRAM domain-containing protein At5g50170 (1027 aa).

The C2 1 domain maps to 1–103 (MRLYVYILQA…ENQTLLPTWF (103 aa)). A compositionally biased stretch (basic and acidic residues) spans 158–167 (SPKDLISSRD). 2 disordered regions span residues 158–177 (SPKDLISSRDGKRRKHHDGK) and 201–223 (LHDESSVGQSVNSNYEDATDQCS). A compositionally biased stretch (basic residues) spans 168–177 (GKRRKHHDGK). Residues 206 to 223 (SVGQSVNSNYEDATDQCS) are compositionally biased toward polar residues. The VASt 1 domain maps to 253–426 (TGGVLVDQKY…LLAKTYKTLD (174 aa)). The helical transmembrane segment at 452-472 (FLYFWSSSVICAVLLSVYVVV) threads the bilayer. The 124-residue stretch at 516–639 (TVHFVQARLH…TADELADLSV (124 aa)) folds into the C2 2 domain. One can recognise a GRAM domain in the interval 693–756 (AFQKLFGLPH…LWEDIDDIQV (64 aa)). A VASt 2 domain is found at 855 to 1018 (MMSKVYTCDL…VIFDLFQKES (164 aa)).

The protein localises to the membrane. The protein is C2 and GRAM domain-containing protein At5g50170 of Arabidopsis thaliana (Mouse-ear cress).